Here is a 131-residue protein sequence, read N- to C-terminus: Holo-[acyl-carrier-protein] synthase (131 aa).

Mg(2+) contacts are provided by Asp8 and Glu59.

Belongs to the P-Pant transferase superfamily. AcpS family. Mg(2+) serves as cofactor.

It is found in the cytoplasm. The catalysed reaction is apo-[ACP] + CoA = holo-[ACP] + adenosine 3',5'-bisphosphate + H(+). In terms of biological role, transfers the 4'-phosphopantetheine moiety from coenzyme A to a Ser of acyl-carrier-protein. The sequence is that of Holo-[acyl-carrier-protein] synthase from Paramagnetospirillum magneticum (strain ATCC 700264 / AMB-1) (Magnetospirillum magneticum).